The chain runs to 2294 residues: Protein Ycf2 (2294 aa).

1648–1655 (GSIGTGRS) contributes to the ATP binding site.

This sequence belongs to the Ycf2 family.

The protein localises to the plastid. Its subcellular location is the chloroplast stroma. Its function is as follows. Probable ATPase of unknown function. Its presence in a non-photosynthetic plant (Epifagus virginiana) and experiments in tobacco indicate that it has an essential function which is probably not related to photosynthesis. In Arabidopsis thaliana (Mouse-ear cress), this protein is Protein Ycf2.